The chain runs to 225 residues: Large ribosomal subunit protein uL1 (225 aa).

It belongs to the universal ribosomal protein uL1 family. In terms of assembly, part of the 50S ribosomal subunit.

Its function is as follows. Binds directly to 23S rRNA. Probably involved in E site tRNA release. Functionally, protein L1 is also a translational repressor protein, it controls the translation of its operon by binding to its mRNA. The protein is Large ribosomal subunit protein uL1 of Thermofilum pendens (strain DSM 2475 / Hrk 5).